The chain runs to 199 residues: Ras-related protein Rab-7b (199 aa).

Residues 15–22 (GAIGVGKT), 34–40 (YEEYQTT), 63–67 (DTGGQ), 124–127 (NKID), and 154–155 (AK) each bind GTP. 2 short sequence motifs (switch) span residues 28–41 (YVHKTFYEEYQTTL) and 67–82 (QERFRSMVSTFYKGSD). Ser186 bears the Phosphoserine mark. 2 S-geranylgeranyl cysteine lipidation sites follow: Cys198 and Cys199.

Belongs to the small GTPase superfamily. Rab family. In terms of tissue distribution, expressed in heart, placenta, lung, skeletal muscle and peripheral blood leukocyte.

Its subcellular location is the late endosome. The protein resides in the lysosome. The protein localises to the golgi apparatus. It localises to the trans-Golgi network. It is found in the cytoplasmic vesicle. Its subcellular location is the phagosome. The protein resides in the phagosome membrane. Controls vesicular trafficking from endosomes to the trans-Golgi network (TGN). Acts as a negative regulator of TLR9 signaling and can suppress TLR9-triggered TNFA, IL6, and IFNB production in macrophages by promoting TLR9 lysosomal degradation. Also negatively regulates TLR4 signaling in macrophages by promoting lysosomal degradation of TLR4. Promotes megakaryocytic differentiation by increasing NF-kappa-B-dependent IL6 production and subsequently enhancing the association of STAT3 with GATA1. Not involved in the regulation of the EGF- and EGFR degradation pathway. This chain is Ras-related protein Rab-7b (RAB7B), found in Homo sapiens (Human).